Consider the following 480-residue polypeptide: Glutamate--tRNA ligase (480 aa).

Residues 9 to 19 carry the 'HIGH' region motif; it reads PSPTGNLHIGT. Positions 250-254 match the 'KMSKS' region motif; the sequence is KLSKR. Lys-253 contributes to the ATP binding site.

Belongs to the class-I aminoacyl-tRNA synthetase family. Glutamate--tRNA ligase type 1 subfamily. Monomer.

The protein localises to the cytoplasm. It catalyses the reaction tRNA(Glu) + L-glutamate + ATP = L-glutamyl-tRNA(Glu) + AMP + diphosphate. Its function is as follows. Catalyzes the attachment of glutamate to tRNA(Glu) in a two-step reaction: glutamate is first activated by ATP to form Glu-AMP and then transferred to the acceptor end of tRNA(Glu). The protein is Glutamate--tRNA ligase of Microcystis aeruginosa (strain NIES-843 / IAM M-2473).